The chain runs to 564 residues: Pyruvate decarboxylase (564 aa).

Pyruvate contacts are provided by D28 and H115. Thiamine diphosphate contacts are provided by residues T390 and G413–I415. D444 is a binding site for Mg(2+). Residues G445–S446 and N471–I476 contribute to the thiamine diphosphate site. Mg(2+) is bound by residues N471 and G473. Position 477 (E477) interacts with pyruvate.

This sequence belongs to the TPP enzyme family. Homotetramer. It depends on Mg(2+) as a cofactor. Thiamine diphosphate is required as a cofactor.

It carries out the reaction a 2-oxocarboxylate + H(+) = an aldehyde + CO2. The catalysed reaction is pyruvate + H(+) = acetaldehyde + CO2. The polypeptide is Pyruvate decarboxylase (PDC1) (Kluyveromyces marxianus (Yeast)).